Reading from the N-terminus, the 710-residue chain is ARM REPEAT PROTEIN INTERACTING WITH ABF2 (710 aa).

Residues 1-35 (MDQQPERREGRSFPERKGQKRKLEEGAAAVEDREI) form a disordered region. ARM repeat units follow at residues 85-127 (EDLV…EKGS), 138-185 (PEYQ…NLAH), 188-227 (SSIK…TLAF), 230-269 (DDNK…NLVH), 272-311 (PHIK…QFAS), 314-353 (SDCK…RLAQ), 355-394 (AHNQ…GLAD), 429-468 (LKRL…HLCS), and 470-509 (EDQR…KLAN). In terms of domain architecture, BTB spans 541-608 (SDVTFLVEGR…IYTGSVDITN (68 aa)).

As to quaternary structure, interacts with ABF2. Interacts with DUF7/AIP1. In terms of tissue distribution, detected in embryos and most of the vegetative and reproductive organs.

It localises to the nucleus. Its pathway is protein modification; protein ubiquitination. Functionally, may act as a substrate-specific adapter of an E3 ubiquitin-protein ligase complex (CUL3-RBX1-BTB) which mediates the ubiquitination and subsequent proteasomal degradation of target proteins. Acts as a positive regulator of ABA response via the modulation of the transcriptional activity of ABF2, a transcription factor which controls ABA-dependent gene expression via the G-box-type ABA-responsive elements. Negative regulator of seed germination and young seedling growth. The chain is ARM REPEAT PROTEIN INTERACTING WITH ABF2 (ARIA) from Arabidopsis thaliana (Mouse-ear cress).